Here is a 73-residue protein sequence, read N- to C-terminus: Large ribosomal subunit protein bL31 (73 aa).

This sequence belongs to the bacterial ribosomal protein bL31 family. Type A subfamily. Part of the 50S ribosomal subunit.

Binds the 23S rRNA. The chain is Large ribosomal subunit protein bL31 from Brucella abortus (strain 2308).